The following is a 352-amino-acid chain: Sphingosine 1-phosphate receptor 2 (352 aa).

At 1-34 (MGGLYSEYLNPEKVLEHYNYTKETLDMQETTSRK) the chain is on the extracellular side. An N-linked (GlcNAc...) asparagine glycan is attached at Asn-19. The helical transmembrane segment at 35–59 (VASAFIIILCCAIVVENLLVLIAVA) threads the bilayer. Over 60–66 (RNSKFHS) the chain is Cytoplasmic. The chain crosses the membrane as a helical span at residues 67 to 95 (AMYLFLGNLAASDLLAGVAFVANTLLSGH). Over 96 to 109 (VTLSLTPVQWFARE) the chain is Extracellular. The chain crosses the membrane as a helical span at residues 110–128 (GSAFITLSASVFSLLAIAI). The Cytoplasmic portion of the chain corresponds to 129–147 (ERQVALAKVKLYGSDKSCR). Residues 148–173 (MLMLIGASWLISLILGGLPILGWNCL) traverse the membrane as a helical segment. Over 174–189 (NQLEACSTVLPLYAKH) the chain is Extracellular. The helical transmembrane segment at 190 to 210 (YVLCVVTIFSVILLAIVALYV) threads the bilayer. Residues 211–233 (RIYFVVRSSHADVAGPQTLALLK) are Cytoplasmic-facing. A helical transmembrane segment spans residues 234–255 (TVTIVLGVFIICWLPAFSILLL). Residues 256-271 (DSTCPVRACPVLYKAH) lie on the Extracellular side of the membrane. A helical membrane pass occupies residues 272-292 (YFFAFATLNSLLNPVIYTWRS). At 293–352 (RDLRREVLRPLQCWRRGKGVTGRRGGNPGHRLLPLRSSSSLERGMHMPTSPTFLEGNTVV) the chain is on the cytoplasmic side. The S-palmitoyl cysteine moiety is linked to residue Cys-305. The interval 333–352 (LERGMHMPTSPTFLEGNTVV) is disordered.

The protein belongs to the G-protein coupled receptor 1 family. As to expression, most abundant in heart and lung; low, but clearly observed in kidney, liver and thymus; much lower but detectable in brain, testis, stomach and intestine. Not significantly detected in any of the sections of embryonic day (E) 14-18, except in embryonic brain.

The protein localises to the cell membrane. Functionally, receptor for the lysosphingolipid sphingosine 1-phosphate (S1P). S1P is a bioactive lysophospholipid that elicits diverse physiological effects on most types of cells and tissues. Receptor for the chemokine-like protein FAM19A5. Mediates the inhibitory effect of FAM19A5 on vascular smooth muscle cell proliferation and migration. In lymphoid follicles, couples the binding of S1P to the activation of GNA13 and downstream inhibition of AKT activation leading to suppression of germinal center (GC) B cell growth and migration outside the GC niche. This Mus musculus (Mouse) protein is Sphingosine 1-phosphate receptor 2 (S1pr2).